An 878-amino-acid polypeptide reads, in one-letter code: Vacuolar membrane protease (878 aa).

Residues 1–16 (MASLRLPRANPLAFTR) lie on the Cytoplasmic side of the membrane. The helical transmembrane segment at 17 to 37 (WPVTVITAIVYLALLIPLLVV) threads the bilayer. At 38-390 (HHVVPSAPSS…STFVLFQLHT (353 aa)) the chain is on the vacuolar side. N-linked (GlcNAc...) asparagine glycosylation is found at Asn53 and Asn119. The Zn(2+) site is built by His174 and Asp186. The Proton acceptor role is filled by Glu220. Zn(2+) contacts are provided by Glu221, Glu246, and His319. A helical membrane pass occupies residues 391 to 411 (LFALLVTLLIVGPLTLLFTSI). Residues 412 to 442 (ALTKADKMYLFRSSAKSEDRLDVVPLQGLRG) lie on the Cytoplasmic side of the membrane. A helical membrane pass occupies residues 443 to 463 (FFRFPFLFGIPTVVTVGLAYL). Over 464-473 (VTKVNPYIIH) the chain is Vacuolar. Residues 474-494 (SSAYAVWSMMVAAWVFLAWFV) form a helical membrane-spanning segment. Residues 495-508 (SRVADFARPSAFHR) are Cytoplasmic-facing. The helical transmembrane segment at 509–529 (IYTLTWMYVLSWVSAVIATVY) threads the bilayer. The Vacuolar segment spans residues 530–533 (ANQR). The helical transmembrane segment at 534–554 (GLAGGYFIFFFHAGIFLATWI) threads the bilayer. Residues 555-659 (SYLELFALPS…ALPKWTWGLQ (105 aa)) lie on the Cytoplasmic side of the membrane. Residues 577 to 590 (GRASGHGSRRGTTS) show a composition bias toward low complexity. Positions 577 to 611 (GRASGHGSRRGTTSGEDDGEEAEEEPTESTSLLGS) are disordered. The segment covering 591–603 (GEDDGEEAEEEPT) has biased composition (acidic residues). A helical membrane pass occupies residues 660-680 (LLLTAPITLIMVGPLALLTIS). The Vacuolar portion of the chain corresponds to 681-693 (AISQTGQDGGHPL). Residues 694–714 (FAYVAIAIFTTIMLTPLLPFI) traverse the membrane as a helical segment. Residues 715 to 721 (HRYTYHV) lie on the Cytoplasmic side of the membrane. Residues 722 to 742 (PLFLLAVFLGTLIYNLVAFPF) traverse the membrane as a helical segment. At 743–878 (SDSNRLKLYY…RRAFEIGNDD (136 aa)) the chain is on the vacuolar side.

Belongs to the peptidase M28 family. Zn(2+) serves as cofactor.

It localises to the vacuole membrane. Functionally, may be involved in vacuolar sorting and osmoregulation. The polypeptide is Vacuolar membrane protease (Aspergillus flavus (strain ATCC 200026 / FGSC A1120 / IAM 13836 / NRRL 3357 / JCM 12722 / SRRC 167)).